Consider the following 351-residue polypeptide: Mannonate dehydratase (351 aa).

Belongs to the mannonate dehydratase family. The cofactor is Fe(2+). It depends on Mn(2+) as a cofactor.

It carries out the reaction D-mannonate = 2-dehydro-3-deoxy-D-gluconate + H2O. Its pathway is carbohydrate metabolism; pentose and glucuronate interconversion. Its function is as follows. Catalyzes the dehydration of D-mannonate. This chain is Mannonate dehydratase, found in Clostridium acetobutylicum (strain ATCC 824 / DSM 792 / JCM 1419 / IAM 19013 / LMG 5710 / NBRC 13948 / NRRL B-527 / VKM B-1787 / 2291 / W).